The following is a 101-amino-acid chain: Small ribosomal subunit protein uS14 (101 aa).

It belongs to the universal ribosomal protein uS14 family. Part of the 30S ribosomal subunit. Contacts proteins S3 and S10.

Its function is as follows. Binds 16S rRNA, required for the assembly of 30S particles and may also be responsible for determining the conformation of the 16S rRNA at the A site. The sequence is that of Small ribosomal subunit protein uS14 from Caulobacter sp. (strain K31).